Here is a 63-residue protein sequence, read N- to C-terminus: Large ribosomal subunit protein eL29 (63 aa).

Basic residues predominate over residues 1 to 26 (MAKSKNHTAHNQTRKAHRNGIKKPKT). Positions 1-35 (MAKSKNHTAHNQTRKAHRNGIKKPKTYKYPSLKGV) are disordered.

The protein belongs to the eukaryotic ribosomal protein eL29 family. Component of the large ribosomal subunit. Mature ribosomes consist of a small (40S) and a large (60S) subunit. The 40S subunit contains about 32 different proteins and 1 molecule of RNA (18S). The 60S subunit contains 45 different proteins and 3 molecules of RNA (25S, 5.8S and 5S).

It is found in the cytoplasm. Component of the ribosome, a large ribonucleoprotein complex responsible for the synthesis of proteins in the cell. The small ribosomal subunit (SSU) binds messenger RNAs (mRNAs) and translates the encoded message by selecting cognate aminoacyl-transfer RNA (tRNA) molecules. The large subunit (LSU) contains the ribosomal catalytic site termed the peptidyl transferase center (PTC), which catalyzes the formation of peptide bonds, thereby polymerizing the amino acids delivered by tRNAs into a polypeptide chain. The nascent polypeptides leave the ribosome through a tunnel in the LSU and interact with protein factors that function in enzymatic processing, targeting, and the membrane insertion of nascent chains at the exit of the ribosomal tunnel. The polypeptide is Large ribosomal subunit protein eL29 (Candida albicans (strain SC5314 / ATCC MYA-2876) (Yeast)).